Consider the following 733-residue polypeptide: MFKTHKIEIEWAGRPLTLETGKIARQADGAVIATYGETIVLATVVSAKSPKPDQDFFPLTVNYQEKSYAVGRIPGGYLKRESRPSENETLISRLIDRPIRPLFADGYKNDTQVIVSVIQHDLENNPDILAMIASSAALTLSGVPFMGPIAGARVGYCNGQYILNPHIDEMSESKLDLVVAGTENAVLMVESEAQELPEDIMLGAVMFGHKGLQPILDAIIKLAEVAAKDPRDFVPEDLSDLETAMLEMAEKDIRKAYTITDKQERYAALDALKTEIINKFMPETEEDCKFSVDQIATVFKQLQAKIVRSNILDTKKRIDGRDLSTVRPIQSEVGILPRTHGSALFTRGETQAIVVATLGTGEDEQYIDSLTGMYKETFLLHYNFPPFSVGETGRLGSPGRREIGHGKLAWRAIHPMLPSKESFPYTIRAVSEITESNGSSSMATVCGTSLALMDAGVPLARPVAGIAMGLIKEGERFAVLSDILGDEDHLGDMDFKVAGTANGITALQMDIKIDGITEEIMKIALEQAKGGRIHILNEMAKALTSARAELSEFSPRIEVMNIAVDKIRDVIGTGGKVIREIVEQTGAKINIEDDGTIRIASADAKTIEAAKRWIHSIVDEPEVGVIYQGTVVKTAEFGAFVNFFGSRDGLVHISQLTTERVTKTTDVVKEGDKVWVKLMGFDERGKVRLSMKIVDQKTGKEIIGEDSIKAEQEKYTEETHKSENKRRRKKKEE.

2 residues coordinate Mg(2+): Asp488 and Asp494. One can recognise a KH domain in the interval 555–614; sequence PRIEVMNIAVDKIRDVIGTGGKVIREIVEQTGAKINIEDDGTIRIASADAKTIEAAKRWI. In terms of domain architecture, S1 motif spans 624 to 692; the sequence is GVIYQGTVVK…ERGKVRLSMK (69 aa). A compositionally biased stretch (basic and acidic residues) spans 711-722; it reads EQEKYTEETHKS. Positions 711-733 are disordered; the sequence is EQEKYTEETHKSENKRRRKKKEE. Over residues 723-733 the composition is skewed to basic residues; sequence ENKRRRKKKEE.

This sequence belongs to the polyribonucleotide nucleotidyltransferase family. The cofactor is Mg(2+).

The protein localises to the cytoplasm. The enzyme catalyses RNA(n+1) + phosphate = RNA(n) + a ribonucleoside 5'-diphosphate. In terms of biological role, involved in mRNA degradation. Catalyzes the phosphorolysis of single-stranded polyribonucleotides processively in the 3'- to 5'-direction. The polypeptide is Polyribonucleotide nucleotidyltransferase (Bartonella henselae (strain ATCC 49882 / DSM 28221 / CCUG 30454 / Houston 1) (Rochalimaea henselae)).